A 452-amino-acid chain; its full sequence is MNIFGTDGVRGRANVYPMDPITVLRLGMAIGLEARKVGTQVVLGKDTRISGYMVESALVSGLVAMGVNVGLLGPMPTAAIATLVRNLRASMGVVISASHNSYLDNGVKIFDSEGIKIPLELEEVLESNVRAELSSDLAQVRGMGKVYRIAGAVGRYIEFVKGTFPKRLKLSGMKIVVDCANGAAYHIGGEVFWELGADVVVIGNKPDGLNINHNCGSLHPEGMVQKVLEEGADIGIALDGDADRVVVCDEKGRLVDGDQVIASIMRHLRATKSITDAAVTTMSSKSIDSYARELGVRLHRSEVGDRHLVDTMRQHSCSVGGEKSGHIILWEHSTTSDSLVAALQILSIMLLENKSASSIFGDFVPMPRVHRDIPYSMEFDHIARLIGPTLSDVEQALGRVNGRVIFRRSGTERLIRCVIEGEDPKLVALVADELSIKLRELGVENGVEPEMQ.

Residue S98 is the Phosphoserine intermediate of the active site. The Mg(2+) site is built by S98, D239, D241, and D243. S98 bears the Phosphoserine mark.

The protein belongs to the phosphohexose mutase family. Requires Mg(2+) as cofactor. In terms of processing, activated by phosphorylation.

The catalysed reaction is alpha-D-glucosamine 1-phosphate = D-glucosamine 6-phosphate. Functionally, catalyzes the conversion of glucosamine-6-phosphate to glucosamine-1-phosphate. The protein is Phosphoglucosamine mutase of Anaplasma marginale (strain Florida).